The chain runs to 486 residues: Malonate-semialdehyde dehydrogenase 1 (486 aa).

NAD(+)-binding residues include F154, K178, E181, R182, and S231. The active-site Nucleophile is the C286. E386 serves as a coordination point for NAD(+).

The protein belongs to the aldehyde dehydrogenase family. IolA subfamily. Homotetramer.

The catalysed reaction is 3-oxopropanoate + NAD(+) + CoA + H2O = hydrogencarbonate + acetyl-CoA + NADH + H(+). It carries out the reaction 2-methyl-3-oxopropanoate + NAD(+) + CoA + H2O = propanoyl-CoA + hydrogencarbonate + NADH + H(+). Its pathway is polyol metabolism; myo-inositol degradation into acetyl-CoA; acetyl-CoA from myo-inositol: step 7/7. Catalyzes the oxidation of malonate semialdehyde (MSA) and methylmalonate semialdehyde (MMSA) into acetyl-CoA and propanoyl-CoA, respectively. Is involved in a myo-inositol catabolic pathway. Bicarbonate, and not CO2, is the end-product of the enzymatic reaction. This Bacillus anthracis protein is Malonate-semialdehyde dehydrogenase 1.